A 194-amino-acid chain; its full sequence is Holliday junction branch migration complex subunit RuvA (194 aa).

The tract at residues 1 to 64 (MIGRITGLLL…EDVHLLFGFM (64 aa)) is domain I. Residues 65 to 140 (TEQERALFRQ…KIDPVAILSE (76 aa)) form a domain II region. A flexible linker region spans residues 140-143 (EAGA). The segment at 144-194 (AASNVDKDILSALLALGYNGREVNRALEQLSEGVTVSDGIMQSLKFLSKVK) is domain III.

It belongs to the RuvA family. Homotetramer. Forms an RuvA(8)-RuvB(12)-Holliday junction (HJ) complex. HJ DNA is sandwiched between 2 RuvA tetramers; dsDNA enters through RuvA and exits via RuvB. An RuvB hexamer assembles on each DNA strand where it exits the tetramer. Each RuvB hexamer is contacted by two RuvA subunits (via domain III) on 2 adjacent RuvB subunits; this complex drives branch migration. In the full resolvosome a probable DNA-RuvA(4)-RuvB(12)-RuvC(2) complex forms which resolves the HJ.

It localises to the cytoplasm. The RuvA-RuvB-RuvC complex processes Holliday junction (HJ) DNA during genetic recombination and DNA repair, while the RuvA-RuvB complex plays an important role in the rescue of blocked DNA replication forks via replication fork reversal (RFR). RuvA specifically binds to HJ cruciform DNA, conferring on it an open structure. The RuvB hexamer acts as an ATP-dependent pump, pulling dsDNA into and through the RuvAB complex. HJ branch migration allows RuvC to scan DNA until it finds its consensus sequence, where it cleaves and resolves the cruciform DNA. The polypeptide is Holliday junction branch migration complex subunit RuvA (Nitrosomonas eutropha (strain DSM 101675 / C91 / Nm57)).